Consider the following 113-residue polypeptide: uncharacterized protein (113 aa).

The protein resides in the mitochondrion. This is an uncharacterized protein from Paramecium tetraurelia.